The following is a 257-amino-acid chain: MASCFCNKVDVTEGTHGTSSSDDALVSSQDPRHPANLICTLCKMFYYNNWVTGTGGGISIKHSKTGHIYIAPSGVQKEQLKPADMFVMDPASGSYLRTPQLYKPSACTPLFMSCYKQRDAGAVIHTHSQHAVMCSLIFDKELRIANIEQIKAIPSGKKDAKTGKDINLSFFDTLVIPIIDNTAHEEDLTEGLQEALQKYPNTTAVIVRRHGIYVWGPSVDKAKVYNEAIDYLMEVAWKMHQLGIPPDCGIGEEKKYL.

A substrate-binding site is contributed by cysteine 107. Zn(2+)-binding residues include histidine 125 and histidine 127. The active-site Proton donor/acceptor is glutamate 148. Histidine 210 contacts Zn(2+).

It belongs to the aldolase class II family. MtnB subfamily. It depends on Zn(2+) as a cofactor.

The protein localises to the cytoplasm. The catalysed reaction is 5-(methylsulfanyl)-D-ribulose 1-phosphate = 5-methylsulfanyl-2,3-dioxopentyl phosphate + H2O. Its pathway is amino-acid biosynthesis; L-methionine biosynthesis via salvage pathway; L-methionine from S-methyl-5-thio-alpha-D-ribose 1-phosphate: step 2/6. In terms of biological role, catalyzes the dehydration of methylthioribulose-1-phosphate (MTRu-1-P) into 2,3-diketo-5-methylthiopentyl-1-phosphate (DK-MTP-1-P). This chain is Methylthioribulose-1-phosphate dehydratase, found in Lachancea thermotolerans (strain ATCC 56472 / CBS 6340 / NRRL Y-8284) (Yeast).